Reading from the N-terminus, the 540-residue chain is Ribonuclease Y (540 aa).

Residues 4–24 (TILVPVAVAIVSVLVGGCAGY) form a helical membrane-spanning segment. Residues 230–293 (TVSVVNLPND…EIAKRALERL (64 aa)) form the KH domain. One can recognise an HD domain in the interval 356 to 449 (VLSHSIEVGK…VVAADTISSA (94 aa)).

It belongs to the RNase Y family.

The protein resides in the cell membrane. Functionally, endoribonuclease that initiates mRNA decay. This is Ribonuclease Y from Lactobacillus gasseri (strain ATCC 33323 / DSM 20243 / BCRC 14619 / CIP 102991 / JCM 1131 / KCTC 3163 / NCIMB 11718 / NCTC 13722 / AM63).